A 142-amino-acid polypeptide reads, in one-letter code: MALERTFSIIKPDAVKRNLIGEIYHRIEKAGLQIIAAKMVHLSEEQASGFYAEHEGKPFFEPLKEFMTSGPIMVQVLEGENAIARYRELMGKTNPEEAACGTLRADYALSMRYNSVHGSDSPASAAREIEFFFPESEICPRP.

Residues lysine 11, phenylalanine 59, arginine 87, threonine 93, arginine 104, and asparagine 114 each coordinate ATP. The active-site Pros-phosphohistidine intermediate is histidine 117.

Belongs to the NDK family. Homotetramer. Requires Mg(2+) as cofactor.

It is found in the cytoplasm. It carries out the reaction dZDP + ATP = dZTP + ADP. The catalysed reaction is a 2'-deoxyribonucleoside 5'-diphosphate + ATP = a 2'-deoxyribonucleoside 5'-triphosphate + ADP. It catalyses the reaction a ribonucleoside 5'-diphosphate + ATP = a ribonucleoside 5'-triphosphate + ADP. Its pathway is purine metabolism. Its function is as follows. Major role in the synthesis of nucleoside triphosphates other than ATP. The ATP gamma phosphate is transferred to the NDP beta phosphate via a ping-pong mechanism, using a phosphorylated active-site intermediate. Functionally, (Microbial infection) Catalyzes the phosphorylation of dZDP to dZTP, when the bacterium is infected by a phage that produces the substrate for the synthesis of dZTP (2- amino-2'-deoxyadenosine 5'-triphosphate), which is then used by the phage as a DNA polymerase substrate. In Vibrio cholerae serotype O1 (strain ATCC 39315 / El Tor Inaba N16961), this protein is Nucleoside diphosphate kinase.